Reading from the N-terminus, the 460-residue chain is Retinoic acid receptor alpha (460 aa).

The tract at residues 1–87 (MASNSSSCPT…PPPLPRIYKP (87 aa)) is modulating. Residues 46-78 (HQLPVSGYSTPSPATVETQSTSSEEIVPSPPSP) are disordered. Residues 52-69 (GYSTPSPATVETQSTSSE) are compositionally biased toward polar residues. NR C4-type zinc fingers lie at residues 88–108 (CFVC…CEGC) and 124–148 (CHRD…LQKC). A DNA-binding region (nuclear receptor) is located at residues 88 to 153 (CFVCQDKSSG…RLQKCFEVGM (66 aa)). The hinge stretch occupies residues 154-182 (SKESVRNDRNKKKKDVPKTECSESYIVTP). An NR LBD domain is found at 183-417 (EVEELIEKVR…PLIQEMLENS (235 aa)). The 9aaTAD signature appears at 408–416 (PLIQEMLEN). Residues 418 to 460 (EGMDTLGGQPGGPRTGGLGPPPGSCSPSLSPSSTRSSPATHSP) form a disordered region. Residues 425 to 435 (GQPGGPRTGGL) are compositionally biased toward gly residues. The segment covering 442 to 460 (CSPSLSPSSTRSSPATHSP) has biased composition (low complexity).

Belongs to the nuclear hormone receptor family. NR1 subfamily. As to quaternary structure, heterodimer; with an RXR molecule. Binds DNA preferentially as a RAR/RXR heterodimer. Ubiquitous.

It is found in the nucleus. Functionally, receptor for retinoic acid. Retinoic acid receptors bind as heterodimers to their target response elements in response to their ligands, all-trans or 9-cis retinoic acid, and regulate gene expression in various biological processes. The RAR/RXR heterodimers bind to the retinoic acid response elements (RARE) composed of tandem 5'-AGGTCA-3' sites known as DR1-DR5. Required for hindbrain patterning and appears to be required for skin development. The protein is Retinoic acid receptor alpha (RARA) of Gallus gallus (Chicken).